The following is a 277-amino-acid chain: Large ribosomal subunit protein uL2 (277 aa).

Disordered stretches follow at residues 34–55 and 213–277; these read LQPL…RHHG and WKGI…RKKK.

The protein belongs to the universal ribosomal protein uL2 family. In terms of assembly, part of the 50S ribosomal subunit. Forms a bridge to the 30S subunit in the 70S ribosome.

One of the primary rRNA binding proteins. Required for association of the 30S and 50S subunits to form the 70S ribosome, for tRNA binding and peptide bond formation. It has been suggested to have peptidyltransferase activity; this is somewhat controversial. Makes several contacts with the 16S rRNA in the 70S ribosome. The chain is Large ribosomal subunit protein uL2 from Staphylococcus haemolyticus (strain JCSC1435).